Consider the following 309-residue polypeptide: MILTVTLNPAIDVSYPLDELKCDTVNRVVDVTKTPGGKGLNVSRVLNEFGETVKATGCVGGESGDFIINHLPDSILSRFYKISGDTRTCIAILHEGNQTEILEKGPMLSVDEIDGFTHHFKYLLNDVDVVTLSGSLPAGMPDDYYQKLIKIANLNGKKTVLDCSGNALEAVLKGDSKPTVIKPNLEELSQLLGKEMTKDFDALKEVLQDELFDGIEWIIVSLGADGVFAKHKDTFYNVDIPKIKIVSAVGSGDSTVAGIASGLANDEDDRALLTKANVLGMLNAQEKTTGHVNMANYDKLYQSIKVKEV.

It belongs to the carbohydrate kinase PfkB family. LacC subfamily.

It catalyses the reaction D-tagatofuranose 6-phosphate + ATP = D-tagatofuranose 1,6-bisphosphate + ADP + H(+). The protein operates within carbohydrate metabolism; D-tagatose 6-phosphate degradation; D-glyceraldehyde 3-phosphate and glycerone phosphate from D-tagatose 6-phosphate: step 1/2. This chain is Tagatose-6-phosphate kinase, found in Streptococcus pyogenes serotype M1.